The sequence spans 443 residues: Thymidine phosphorylase (443 aa).

This sequence belongs to the thymidine/pyrimidine-nucleoside phosphorylase family. Homodimer.

It catalyses the reaction thymidine + phosphate = 2-deoxy-alpha-D-ribose 1-phosphate + thymine. Its pathway is pyrimidine metabolism; dTMP biosynthesis via salvage pathway; dTMP from thymine: step 1/2. Its function is as follows. The enzymes which catalyze the reversible phosphorolysis of pyrimidine nucleosides are involved in the degradation of these compounds and in their utilization as carbon and energy sources, or in the rescue of pyrimidine bases for nucleotide synthesis. The polypeptide is Thymidine phosphorylase (Shewanella frigidimarina (strain NCIMB 400)).